We begin with the raw amino-acid sequence, 213 residues long: Protein brother (213 aa).

The interval 189 to 213 (HTPQTPPEDHHHRGGPGLPRGPMGW) is disordered. Gly residues predominate over residues 203-213 (GPGLPRGPMGW).

This sequence belongs to the CBF-beta family.

Its subcellular location is the nucleus. In terms of biological role, regulates the DNA-binding properties of Runt. This Drosophila melanogaster (Fruit fly) protein is Protein brother (Bro).